The primary structure comprises 210 residues: Uridine kinase (210 aa).

12-19 (GGSGSGKT) contributes to the ATP binding site.

This sequence belongs to the uridine kinase family.

The protein resides in the cytoplasm. The catalysed reaction is uridine + ATP = UMP + ADP + H(+). The enzyme catalyses cytidine + ATP = CMP + ADP + H(+). It functions in the pathway pyrimidine metabolism; CTP biosynthesis via salvage pathway; CTP from cytidine: step 1/3. The protein operates within pyrimidine metabolism; UMP biosynthesis via salvage pathway; UMP from uridine: step 1/1. In Bacillus pumilus (strain SAFR-032), this protein is Uridine kinase.